Reading from the N-terminus, the 96-residue chain is uncharacterized protein (96 aa).

Residues 9 to 86 (EELKSQAQVY…NKYADTVAER (78 aa)) are a coiled coil.

This sequence belongs to the WXG100 family. sagEsxA-like subfamily.

This is an uncharacterized protein from Clostridium acetobutylicum (strain ATCC 824 / DSM 792 / JCM 1419 / IAM 19013 / LMG 5710 / NBRC 13948 / NRRL B-527 / VKM B-1787 / 2291 / W).